Reading from the N-terminus, the 100-residue chain is Nucleoid-associated protein Rcas_2292 (100 aa).

Belongs to the YbaB/EbfC family. In terms of assembly, homodimer.

The protein resides in the cytoplasm. The protein localises to the nucleoid. In terms of biological role, binds to DNA and alters its conformation. May be involved in regulation of gene expression, nucleoid organization and DNA protection. In Roseiflexus castenholzii (strain DSM 13941 / HLO8), this protein is Nucleoid-associated protein Rcas_2292.